The following is a 318-amino-acid chain: Taste receptor type 2 member 60 (318 aa).

The Extracellular segment spans residues 1 to 7 (MNGDHMV). Residues 8–28 (LGSSVTDKKAIILVTILLLLR) form a helical membrane-spanning segment. The Cytoplasmic portion of the chain corresponds to 29–40 (LVAIAGNGFIIA). The helical transmembrane segment at 41–61 (ALGVEWVLRRMLLPCDXLLVS) threads the bilayer. Over 62–88 (LGASRFCLQSVVMGKTIYVFLHPMAFP) the chain is Extracellular. The chain crosses the membrane as a helical span at residues 89-109 (YNPVLQFLAFQWDFLNAATLW). The Cytoplasmic portion of the chain corresponds to 110 to 128 (FSTWLSVFYCVKIAAFTHP). Residues 129 to 149 (VFLWLKHKLSGWLPWILFSSV) form a helical membrane-spanning segment. Over 150–183 (GLSSFTTILFFIGNHRMYQNYLRNHLQPWNITGN) the chain is Extracellular. The N-linked (GlcNAc...) asparagine glycan is linked to Asn179. The chain crosses the membrane as a helical span at residues 184 to 204 (SIRSYCEKFYLFPLKMITWTM). The Cytoplasmic segment spans residues 205–234 (PTAVFFICMILLITSLGRHMKKALLTTSGF). The helical transmembrane segment at 235 to 255 (REPSMQAHIKALLALLSFAML) threads the bilayer. Topologically, residues 256-264 (FISYFLSLV) are extracellular. The chain crosses the membrane as a helical span at residues 265-285 (FSAAGIFPPLDFKFWVWESVI). Over 286–318 (YLCAAVHPIILLFSNCRLRAVLKSCRSSRCGTP) the chain is Cytoplasmic.

It belongs to the G-protein coupled receptor T2R family.

The protein resides in the membrane. Receptor that may play a role in the perception of bitterness and is gustducin-linked. May play a role in sensing the chemical composition of the gastrointestinal content. The activity of this receptor may stimulate alpha gustducin, mediate PLC-beta-2 activation and lead to the gating of TRPM5. In Gorilla gorilla gorilla (Western lowland gorilla), this protein is Taste receptor type 2 member 60 (TAS2R60).